A 141-amino-acid chain; its full sequence is ATP synthase epsilon chain (141 aa).

It belongs to the ATPase epsilon chain family. F-type ATPases have 2 components, CF(1) - the catalytic core - and CF(0) - the membrane proton channel. CF(1) has five subunits: alpha(3), beta(3), gamma(1), delta(1), epsilon(1). CF(0) has three main subunits: a, b and c.

Its subcellular location is the cell inner membrane. Produces ATP from ADP in the presence of a proton gradient across the membrane. This is ATP synthase epsilon chain from Pseudomonas fluorescens (strain Pf0-1).